The primary structure comprises 251 residues: Hydroxyacylglutathione hydrolase (251 aa).

Positions 59, 61, 63, 64, 118, 141, and 179 each coordinate Zn(2+).

It belongs to the metallo-beta-lactamase superfamily. Glyoxalase II family. In terms of assembly, monomer. Zn(2+) serves as cofactor.

It catalyses the reaction an S-(2-hydroxyacyl)glutathione + H2O = a 2-hydroxy carboxylate + glutathione + H(+). It participates in secondary metabolite metabolism; methylglyoxal degradation; (R)-lactate from methylglyoxal: step 2/2. Thiolesterase that catalyzes the hydrolysis of S-D-lactoyl-glutathione to form glutathione and D-lactic acid. This Prochlorococcus marinus (strain NATL2A) protein is Hydroxyacylglutathione hydrolase.